The primary structure comprises 368 residues: MVVLGSTGSIGKNALKIAKKFGIEIEALSCGKNIALINEQIQVFKPKKVAILDPSDLNDLEPLGAEVFVGLEGIDAMIEECTSNLVLNAIVGVAGLKASFKSLQRNKKLALANKESLVSAGHLLDISQITPIDSEHFGLWALLQNKTLKPKSLIISASGGAFRDTPLEFIPIQNAQNALKHPNWSMGSKITIDSASMVNKLFEILETYWLFGASLKIDALIERSSIVHALVEFEDNSIIAHLASADMQLPISYAIDPKLASLSASIKPLDLYALSAIKFEPISMERYTLWCYKDLLLENPKLGVVLNASNEVAMEKFLNKEIAFGGLIQTISQALESYDKMPFKLSSLEEVLELDKEVRERFKNVAGV.

NADPH contacts are provided by T7, G8, S9, I10, G31, K32, N33, and N113. 1-deoxy-D-xylulose 5-phosphate is bound at residue K114. E115 is an NADPH binding site. Residue D133 coordinates Mn(2+). 1-deoxy-D-xylulose 5-phosphate contacts are provided by S134, E135, S158, and H181. E135 lines the Mn(2+) pocket. Residue G187 coordinates NADPH. 1-deoxy-D-xylulose 5-phosphate contacts are provided by S194, N199, K200, and E203. Position 203 (E203) interacts with Mn(2+).

The protein belongs to the DXR family. Mg(2+) is required as a cofactor. Mn(2+) serves as cofactor.

It carries out the reaction 2-C-methyl-D-erythritol 4-phosphate + NADP(+) = 1-deoxy-D-xylulose 5-phosphate + NADPH + H(+). The protein operates within isoprenoid biosynthesis; isopentenyl diphosphate biosynthesis via DXP pathway; isopentenyl diphosphate from 1-deoxy-D-xylulose 5-phosphate: step 1/6. In terms of biological role, catalyzes the NADPH-dependent rearrangement and reduction of 1-deoxy-D-xylulose-5-phosphate (DXP) to 2-C-methyl-D-erythritol 4-phosphate (MEP). This chain is 1-deoxy-D-xylulose 5-phosphate reductoisomerase, found in Helicobacter pylori (strain ATCC 700392 / 26695) (Campylobacter pylori).